Consider the following 85-residue polypeptide: Follicular dendritic cell secreted peptide (85 aa).

Residues 1 to 17 (MKKVLLLITAILAVAVG) form the signal peptide. Residues 75 to 83 (SAPTTPLPS) are O-glycosylated at one site.

O-glycosylated with core 1 or possibly core 8 glycans. As to expression, abundantly expressed in tonsil, lymph node, and trachea; strong expression in prostate; lower expression in thyroid, stomach, and colon.

It localises to the secreted. Its function is as follows. Can bind to the surface of B-lymphoma cells, but not T-lymphoma cells, consistent with a function as a secreted mediator acting upon B-cells. The sequence is that of Follicular dendritic cell secreted peptide (FDCSP) from Homo sapiens (Human).